The sequence spans 62 residues: Glucagon (62 aa).

It belongs to the glucagon family.

It is found in the secreted. Promotes hydrolysis of glycogen and lipids, and raises the blood sugar level. This Scyliorhinus canicula (Small-spotted catshark) protein is Glucagon (gcg).